The chain runs to 496 residues: Probable serine/threonine-protein kinase DDB_G0284251 (496 aa).

Over residues 1 to 13 the composition is skewed to low complexity; the sequence is MIEINNNHNNGNG. The disordered stretch occupies residues 1–25; that stretch reads MIEINNNHNNGNGKQFPSSQIMPDS. In terms of domain architecture, Protein kinase spans 36 to 288; sequence YTLGEKIGRG…AQELLQHPIF (253 aa). ATP-binding positions include 42–50 and Lys65; that span reads IGRGAFGQV. Asp158 functions as the Proton acceptor in the catalytic mechanism. Residues 323 to 345 are disordered; sequence DWGSSSSTSGSSTPLSSSSSSSN. Positions 353-386 form a coiled coil; it reads EDFNKLQTTIKQQAQTISNLSEEILILKKELKEK. Positions 454–496 are disordered; that stretch reads PQLTPSSSRENISLSNSSSSIPNPNQNQNQNNKSKSKKFGFFS. The span at 458–486 shows a compositional bias: low complexity; it reads PSSSRENISLSNSSSSIPNPNQNQNQNNK. Positions 487–496 are enriched in basic residues; it reads SKSKKFGFFS.

This sequence belongs to the protein kinase superfamily. STE Ser/Thr protein kinase family. Mg(2+) is required as a cofactor.

The enzyme catalyses L-seryl-[protein] + ATP = O-phospho-L-seryl-[protein] + ADP + H(+). The catalysed reaction is L-threonyl-[protein] + ATP = O-phospho-L-threonyl-[protein] + ADP + H(+). The sequence is that of Probable serine/threonine-protein kinase DDB_G0284251 from Dictyostelium discoideum (Social amoeba).